Reading from the N-terminus, the 115-residue chain is UPF0342 protein Bsph_0375 (115 aa).

The protein belongs to the UPF0342 family.

In Lysinibacillus sphaericus (strain C3-41), this protein is UPF0342 protein Bsph_0375.